We begin with the raw amino-acid sequence, 630 residues long: Plastin-1 (630 aa).

The residue at position 1 (methionine 1) is an N-acetylmethionine. 2 EF-hand domains span residues 11-46 (EELE…ASLP) and 51-86 (KVRE…LKSK). Aspartate 24, aspartate 26, serine 28, tyrosine 30, glutamate 35, aspartate 64, asparagine 66, aspartate 68, lysine 70, and glutamate 75 together coordinate Ca(2+). Actin-binding regions lie at residues 108–381 (TSSI…CLHK) and 382–626 (PDNN…GKGL). Calponin-homology (CH) domains lie at 122–238 (EEEK…KVGL), 266–377 (LSPE…NTYP), 396–505 (SKEE…RRYT), and 517–626 (KVTD…GKGL).

Monomer. In terms of processing, phosphorylated. In the inner ear, it is expressed in the organ of Corti. Abundant in the utricle (at protein level).

Its subcellular location is the cytoplasm. The protein localises to the cell projection. It localises to the stereocilium. Actin-bundling protein. In the inner ear, it is required for stereocilia formation. Mediates liquid packing of actin filaments that is necessary for stereocilia to grow to their proper dimensions. The polypeptide is Plastin-1 (Pls1) (Mus musculus (Mouse)).